The sequence spans 932 residues: Myelin gene regulatory factor-like A (932 aa).

Composition is skewed to low complexity over residues 1-19 (MDGY…QQHQ) and 33-48 (QQQQ…QQQQ). Disordered regions lie at residues 1–63 (MDGY…ISNG), 152–256 (VNSP…LSSS), 269–328 (TNTQ…NENP), 540–568 (VTPP…SNNM), 582–601 (TMNI…LSQL), 613–660 (TQNH…NNNN), and 680–726 (NINN…CHWN). A compositionally biased stretch (polar residues) spans 49 to 59 (PMNGSNNQLLG). Residues 127–154 (LDSSFLMLQQQLQDQQQQIAQFNSSVNS) are a coiled coil. Low complexity-rich tracts occupy residues 152-249 (VNSP…ANNT) and 277-294 (PRSI…TNSP). A DNA-binding region (NDT80) is located at residues 286 to 546 (PNLSPTNSPI…ATQVTPPGDL (261 aa)). Positions 311 to 328 (ENENSDPPSPMTQYNENP) are enriched in polar residues. 2 stretches are compositionally biased toward low complexity: residues 615 to 660 (NHNN…NNNN) and 680 to 721 (NINN…NNNN). In terms of domain architecture, Peptidase S74 spans 767–877 (SDLRIKYDLK…KQMDEMKLKL (111 aa)). Residues 863–895 (TQELSKQMDEMKLKLITYESKLKNLKKKSKNQT) are a coiled coil. The helical transmembrane segment at 895 to 915 (TILLIIFMITFLLVALYMYKP) threads the bilayer.

Its subcellular location is the membrane. Transcription factor which acts as a key regulator of pstA (prestalk-A) cells differentiation. Essential for ecmA-specific gene expression. The chain is Myelin gene regulatory factor-like A (mrfA) from Dictyostelium discoideum (Social amoeba).